Here is a 139-residue protein sequence, read N- to C-terminus: Non-structural protein 1 (139 aa).

The DLNP; interaction with MAP1B motif lies at 136–139 (DLNP).

The protein belongs to the pneumovirus non-structural protein 1 family. Monomer. Homomultimer. Heteromultimer with NS2. Interacts with the matrix protein M. Interacts with host ELOC and CUL2; this interaction allows NS1 to form an active E3 ligase with ELOC and CUL2. Interacts with host IRF3; this interaction leads to the disrupted association of IRF3 with CREBBP and thus reduced binding of IRF3 to the IFN-beta promoter. Interacts with host MAVS; this interaction prevents MAVS binding to RIGI and inhibits signaling pathway leading to interferon production. Interacts with host MAP1B/microtubule-associated protein 1B. Interacts with host TRIM25 (via SPRY domain); this interaction suppresses RIGI ubiquitination and results in decreased interaction between RIGI and MAVS.

The protein resides in the host cytoplasm. It localises to the host mitochondrion. It is found in the host nucleus. Its function is as follows. Plays a major role in antagonizing the type I IFN-mediated antiviral response by degrading or inhibiting multiple cellular factors required for either IFN induction or response pathways. Acts cooperatively with NS2 to repress activation and nuclear translocation of host IFN-regulatory factor IRF3. Also disrupts the association of IRF3 with CREBBP. Interacts with host mitochondrial-associated membrane (MAM) MAVS and prevents the interaction with RIGI. Interacts with TRIM25 to suppress TRIM25-mediated RIGI ubiquitination and thereby RIGI-MAVS interaction. Together with NS2, participates in the proteasomal degradation of host STAT2, IRF3, IRF7, TBK1 and RIGI through a NS-degradasome involving CUL2 and Elongin-C. The degradasome requires an intact mitochondrial MAVS. Decreases the levels of host TRAF3 and IKBKE/IKK-epsilon. As functions other than disruptions of the type I IFN-mediated antiviral signaling pathways, induces host SOCS1 and SOCS3 expression. Suppresses premature apoptosis by an NF-kappa-B-dependent, interferon-independent mechanism and thus facilitates virus growth. Additionally, NS1 may serve some inhibitory role in viral transcription and RNA replication. Suppresses proliferation and activation of host CD103+ CD8+ cytotoxic T-lymphocytes and Th17 helper T-lymphocytes. This is Non-structural protein 1 (1C) from Homo sapiens (Human).